Consider the following 577-residue polypeptide: CTP synthase (577 aa).

Residues 1 to 268 (MDPAFIFITG…GALLCERLRL (268 aa)) form an amidoligase domain region. Serine 14 is a binding site for CTP. Residue serine 14 participates in UTP binding. 15 to 20 (SLGKGI) contributes to the ATP binding site. Position 55 (tyrosine 55) interacts with L-glutamine. Residue aspartate 72 participates in ATP binding. Positions 72 and 142 each coordinate Mg(2+). Residues 149 to 151 (DIE), 189 to 194 (KTKPLQ), and lysine 225 contribute to the CTP site. Residues 189–194 (KTKPLQ) and lysine 225 contribute to the UTP site. Residues 333–575 (TVALVGKYVS…VAAGLERKDS (243 aa)) form the Glutamine amidotransferase type-1 domain. Glycine 396 lines the L-glutamine pocket. Cysteine 423 (nucleophile; for glutamine hydrolysis) is an active-site residue. Residues 424 to 427 (LGMQ), glutamate 447, and arginine 503 contribute to the L-glutamine site. Catalysis depends on residues histidine 548 and glutamate 550.

Belongs to the CTP synthase family. In terms of assembly, homotetramer.

The catalysed reaction is UTP + L-glutamine + ATP + H2O = CTP + L-glutamate + ADP + phosphate + 2 H(+). It catalyses the reaction L-glutamine + H2O = L-glutamate + NH4(+). The enzyme catalyses UTP + NH4(+) + ATP = CTP + ADP + phosphate + 2 H(+). It functions in the pathway pyrimidine metabolism; CTP biosynthesis via de novo pathway; CTP from UDP: step 2/2. Its activity is regulated as follows. Allosterically activated by GTP, when glutamine is the substrate; GTP has no effect on the reaction when ammonia is the substrate. The allosteric effector GTP functions by stabilizing the protein conformation that binds the tetrahedral intermediate(s) formed during glutamine hydrolysis. Inhibited by the product CTP, via allosteric rather than competitive inhibition. Functionally, catalyzes the ATP-dependent amination of UTP to CTP with either L-glutamine or ammonia as the source of nitrogen. Regulates intracellular CTP levels through interactions with the four ribonucleotide triphosphates. This is CTP synthase from Treponema pallidum (strain Nichols).